Reading from the N-terminus, the 122-residue chain is Large ribosomal subunit protein uL14 (122 aa).

This sequence belongs to the universal ribosomal protein uL14 family. In terms of assembly, part of the 50S ribosomal subunit. Forms a cluster with proteins L3 and L19. In the 70S ribosome, L14 and L19 interact and together make contacts with the 16S rRNA in bridges B5 and B8.

Binds to 23S rRNA. Forms part of two intersubunit bridges in the 70S ribosome. The protein is Large ribosomal subunit protein uL14 of Thermoanaerobacter pseudethanolicus (strain ATCC 33223 / 39E) (Clostridium thermohydrosulfuricum).